The chain runs to 497 residues: Glycerol kinase (497 aa).

T12 is a binding site for ADP. T12, T13, and S14 together coordinate ATP. T12 is a sn-glycerol 3-phosphate binding site. R16 is a binding site for ADP. R82, E83, Y134, and D243 together coordinate sn-glycerol 3-phosphate. Glycerol-binding residues include R82, E83, Y134, D243, and Q244. Residues T265 and G308 each contribute to the ADP site. Residues T265, G308, Q312, and G409 each coordinate ATP. ADP-binding residues include G409 and N413.

This sequence belongs to the FGGY kinase family. As to quaternary structure, homotetramer and homodimer (in equilibrium).

The catalysed reaction is glycerol + ATP = sn-glycerol 3-phosphate + ADP + H(+). The protein operates within polyol metabolism; glycerol degradation via glycerol kinase pathway; sn-glycerol 3-phosphate from glycerol: step 1/1. With respect to regulation, activated by phosphorylation and inhibited by fructose 1,6-bisphosphate (FBP). Key enzyme in the regulation of glycerol uptake and metabolism. Catalyzes the phosphorylation of glycerol to yield sn-glycerol 3-phosphate. In Thermoanaerobacter sp. (strain X514), this protein is Glycerol kinase.